A 489-amino-acid chain; its full sequence is L-asparagine permease (489 aa).

A run of 12 helical transmembrane segments spans residues 38–58, 62–82, 113–133, 150–170, 175–195, 223–243, 268–288, 302–322, 357–377, 382–402, 426–446, and 452–472; these read HVNM…GAGG, DAGP…FFVV, VAGW…ITAI, VLAL…VKIF, FWFA…GIFL, VMPV…LELV, VALF…SSLY, IGVP…AMSS, YGGI…NYLV, FEIV…IIMI, SPVT…LMWN, and RKTV…WFGV.

This sequence belongs to the amino acid-polyamine-organocation (APC) superfamily. Amino acid transporter (AAT) (TC 2.A.3.1) family.

The protein resides in the cell membrane. This is L-asparagine permease (ansP) from Streptomyces coelicolor (strain ATCC BAA-471 / A3(2) / M145).